A 267-amino-acid chain; its full sequence is Short-chain dehydrogenase/reductase GME11361 (267 aa).

NADP(+)-binding residues include I10, T36, K42, D57, N80, Y129, K133, V162, and S164. Y129 functions as the Proton acceptor in the catalytic mechanism. Residue K133 is the Lowers pKa of active site Tyr of the active site.

It belongs to the short-chain dehydrogenases/reductases (SDR) family.

It participates in secondary metabolite biosynthesis. In terms of biological role, short-chain dehydrogenase/reductase; part of the gene cluster that mediates the biosynthesis of dibenzodioxocinones such as pestalotiollide B, a novel class of inhibitors against cholesterol ester transfer protein (CEPT). The biosynthesis initiates from condensation of acetate and malonate units catalyzed by the non-reducing PKS pks8/GME11356. Pks8/GME11356 lacks a thioesterase (TE) domain, which is important to the cyclizing of the third ring of atrochrysone carboxylic acid, and the esterase GME11355 might play the role of TE and catalyzes the cyclization reaction of the C ring. The lactamase-like protein GME11357 (or other beta-lactamases in Pestalotiopsis microspora) probably hydrolyzes the thioester bond between the ACP of pks8/GME11356 and the intermediate to release atrochrysone carboxylic acid, which is spontaneously dehydrates to form endocrocin anthrone. Endocrocin anthrone is further converted to emodin via the endocrocin intermediate. Emodin is then oxidized by several enzymes such as the Baeyer-Villiger oxidase GME11358, the oxidoreductase GME11367, the short chain dehydrogenase/reductase GME11373, as well as by other oxidoreductases from the cluster, to modify the A and C rings and open the B ring, and finally yield monodictyphenone. The prenyltransferase GME11375 may catalyze the addition reaction between the C5 side chains and the carbon bone of dibenzodioxocinones. The remaining biochemical reactions to the final product dibenzodioxocinones should be methylation catalyzed by methyltransferase GME11366 and reduction and lactonization reaction catalyzed by a series of oxidordeuctases. The polypeptide is Short-chain dehydrogenase/reductase GME11361 (Pestalotiopsis microspora).